Reading from the N-terminus, the 368-residue chain is F-box only protein 28 (368 aa).

A compositionally biased stretch (basic and acidic residues) spans 1-11 (MAAASEERMAE). The segment at 1 to 57 (MAAASEERMAEEGGGGHGDGGSPSAIASTQRLPPPPPPQPPQPGSQAPPAPALAPDQ) is disordered. Gly residues predominate over residues 12 to 21 (EGGGGHGDGG). The span at 32–52 (LPPPPPPQPPQPGSQAPPAPA) shows a compositional bias: pro residues. Positions 61 to 109 (NNTLVALPIVAIENILSFMSYDEISQLRLVCKRMDLVCQRMLNQGFLKV) constitute an F-box domain. Residues S235 and S242 each carry the phosphoserine modification. T270 bears the Phosphothreonine mark. A disordered region spans residues 328-368 (MESAVGNSSGSGQSEESPRKRKKAAEAIDSLRKSKRLRNRK). S344 carries the phosphoserine modification.

Part of a SCF (SKP1-cullin-F-box) protein ligase complex.

It is found in the chromosome. The protein localises to the centromere. The protein resides in the kinetochore. In terms of biological role, probably recognizes and binds to some phosphorylated proteins and promotes their ubiquitination and degradation. This is F-box only protein 28 (FBXO28) from Bos taurus (Bovine).